A 106-amino-acid chain; its full sequence is Large ribosomal subunit protein bL21 (106 aa).

It belongs to the bacterial ribosomal protein bL21 family. As to quaternary structure, part of the 50S ribosomal subunit. Contacts protein L20.

This protein binds to 23S rRNA in the presence of protein L20. The sequence is that of Large ribosomal subunit protein bL21 from Xanthomonas campestris pv. campestris (strain ATCC 33913 / DSM 3586 / NCPPB 528 / LMG 568 / P 25).